A 191-amino-acid chain; its full sequence is Inosine triphosphate pyrophosphatase (191 aa).

12 to 17 (TGNANK) contacts ITP. Glutamate 42 serves as a coordination point for Mg(2+). ITP is bound by residues lysine 54, 70–71 (DT), lysine 87, 145–148 (FGWD), lysine 168, and 173–174 (HR).

It belongs to the HAM1 NTPase family. As to quaternary structure, homodimer. Mg(2+) is required as a cofactor. Requires Mn(2+) as cofactor.

The protein localises to the cytoplasm. It catalyses the reaction ITP + H2O = IMP + diphosphate + H(+). The enzyme catalyses dITP + H2O = dIMP + diphosphate + H(+). The catalysed reaction is XTP + H2O = XMP + diphosphate + H(+). In terms of biological role, pyrophosphatase that hydrolyzes non-canonical purine nucleotides such as inosine triphosphate (ITP), deoxyinosine triphosphate (dITP) or xanthosine 5'-triphosphate (XTP) to their respective monophosphate derivatives. The enzyme does not distinguish between the deoxy- and ribose forms. Probably excludes non-canonical purines from RNA and DNA precursor pools, thus preventing their incorporation into RNA and DNA and avoiding chromosomal lesions. The polypeptide is Inosine triphosphate pyrophosphatase (Phytophthora infestans (strain T30-4) (Potato late blight agent)).